Reading from the N-terminus, the 154-residue chain is Myoglobin (154 aa).

One can recognise a Globin domain in the interval 2–148 (GLSDGEWELV…FRNDIAAKYK (147 aa)). Position 4 is a phosphoserine (Ser4). Residue Thr68 is modified to Phosphothreonine. Residue His94 coordinates heme b.

This sequence belongs to the globin family. Monomeric.

Its subcellular location is the cytoplasm. The protein localises to the sarcoplasm. The enzyme catalyses Fe(III)-heme b-[protein] + nitric oxide + H2O = Fe(II)-heme b-[protein] + nitrite + 2 H(+). It catalyses the reaction H2O2 + AH2 = A + 2 H2O. In terms of biological role, monomeric heme protein which primary function is to store oxygen and facilitate its diffusion within muscle tissues. Reversibly binds oxygen through a pentacoordinated heme iron and enables its timely and efficient release as needed during periods of heightened demand. Depending on the oxidative conditions of tissues and cells, and in addition to its ability to bind oxygen, it also has a nitrite reductase activity whereby it regulates the production of bioactive nitric oxide. Under stress conditions, like hypoxia and anoxia, it also protects cells against reactive oxygen species thanks to its pseudoperoxidase activity. This is Myoglobin (MB) from Loxodonta africana (African elephant).